The primary structure comprises 1053 residues: Protein CLEC16A (1053 aa).

An FPL domain is found at 51-198 (IRSITEILIW…AVRTITLNVY (148 aa)). Disordered stretches follow at residues 375–434 (SLEM…GESE), 452–471 (STSV…AATC), and 892–983 (SSPS…SPSL). A compositionally biased stretch (basic residues) spans 381 to 392 (HKGKRRVQKRPN). Residues 892-938 (SSPSLSSQSPPSASGSPSGSGSTSHCDSGGTSSSSTPSTAQSPADAP) are compositionally biased toward low complexity.

This sequence belongs to the CLEC16A/gop-1 family. In terms of assembly, interacts with RNF41/NRDP1. Almost exclusively expressed in immune cells, including dendritic cells, B-lymphocytes and natural killer cells.

The protein localises to the endosome membrane. The protein resides in the lysosome membrane. In terms of biological role, regulator of mitophagy through the upstream regulation of the RNF41/NRDP1-PRKN pathway. Mitophagy is a selective form of autophagy necessary for mitochondrial quality control. The RNF41/NRDP1-PRKN pathway regulates autophagosome-lysosome fusion during late mitophagy. May protect RNF41/NRDP1 from proteasomal degradation, RNF41/NRDP1 which regulates proteasomal degradation of PRKN. Plays a key role in beta cells functions by regulating mitophagy/autophagy and mitochondrial health. The sequence is that of Protein CLEC16A from Homo sapiens (Human).